Here is a 141-residue protein sequence, read N- to C-terminus: Large ribosomal subunit protein uL11 (141 aa).

The protein belongs to the universal ribosomal protein uL11 family. Part of the ribosomal stalk of the 50S ribosomal subunit. Interacts with L10 and the large rRNA to form the base of the stalk. L10 forms an elongated spine to which L12 dimers bind in a sequential fashion forming a multimeric L10(L12)X complex. In terms of processing, one or more lysine residues are methylated.

In terms of biological role, forms part of the ribosomal stalk which helps the ribosome interact with GTP-bound translation factors. This is Large ribosomal subunit protein uL11 from Selenomonas ruminantium.